The following is a 174-amino-acid chain: uncharacterized protein (174 aa).

Composition is skewed to basic and acidic residues over residues 1 to 31 (MDKH…GKEG) and 52 to 67 (EPPR…ERRS). The disordered stretch occupies residues 1 to 69 (MDKHGVKTPL…GEGRERRSVS (69 aa)).

This is an uncharacterized protein from Homo sapiens (Human).